We begin with the raw amino-acid sequence, 792 residues long: Endonuclease MutS2 (792 aa).

Position 344-351 (344-351 (GPNTGGKT)) interacts with ATP. Positions 716-791 (IHLRGLHVEE…GLGVTVVYLE (76 aa)) constitute a Smr domain.

It belongs to the DNA mismatch repair MutS family. MutS2 subfamily. In terms of assembly, homodimer. Binds to stalled ribosomes, contacting rRNA.

Functionally, endonuclease that is involved in the suppression of homologous recombination and thus may have a key role in the control of bacterial genetic diversity. Acts as a ribosome collision sensor, splitting the ribosome into its 2 subunits. Detects stalled/collided 70S ribosomes which it binds and splits by an ATP-hydrolysis driven conformational change. Acts upstream of the ribosome quality control system (RQC), a ribosome-associated complex that mediates the extraction of incompletely synthesized nascent chains from stalled ribosomes and their subsequent degradation. Probably generates substrates for RQC. In Thermomicrobium roseum (strain ATCC 27502 / DSM 5159 / P-2), this protein is Endonuclease MutS2.